Reading from the N-terminus, the 629-residue chain is Embryonic polyadenylate-binding protein A (629 aa).

4 consecutive RRM domains span residues 11–89 (ASLY…WSQR), 99–175 (GNVF…HFKS), 191–268 (TNVY…RAQK), and 294–370 (VNLY…LAQR). The region spanning 539–616 (QEPLTASLLA…AVAVLQAHQA (78 aa)) is the PABC domain.

This sequence belongs to the polyadenylate-binding protein type-1 family. Interacts with dazl in an RNA-independent manner. The C-terminus can self-associate and also interact with the C-terminus of pabpc1, independently of RNA. RRM 1 and RRM 2 interact with both eif4g1 and paip1, and the C-terminus also interacts with paip1. Prior to oocyte maturation, found in a complex with dazl and pum2 proteins and spdy1 mRNA; pum2 dissociates from the complex during maturation. Interacts with the translation termination factor sup35/erf3. As to expression, expressed in adult testis, but at a reduced level compared to oocytes.

It localises to the cytoplasm. Functionally, binds and protects the poly(A) tail of mRNA with or without an AU-rich element (ARE) and prevents mRNA deadenylation. Stimulates the translation of mRNAs to which it is bound during early development. The sequence is that of Embryonic polyadenylate-binding protein A (epabp-a) from Xenopus laevis (African clawed frog).